The chain runs to 275 residues: MTLQQQIIKALGSKPQINAEEEIRRSVDFLKSYLQTYPFIKSLVLGISGGQDSTLAGKLCQMAINELRQETGNESLQFIAVRLPYGVQADEQDCQDAIAFIQPDRVLTVNIKGAVLASEQALREADIELSDFVRGNEKARERMKAQYSIAGMTSGVVVGTDHAAEAITGFFTKYGDGGTDINPLYRLNKRQGKQLLAALACPEHLYKKAPTADLEDDRPSLPDEVALGVTYDNIDDYLEGKNVPQQVARTIENWYLKTEHKRRPPITVFDDFWKK.

46-53 (GISGGQDS) serves as a coordination point for ATP. Aspartate 52 provides a ligand contact to Mg(2+). Arginine 140 contacts deamido-NAD(+). Position 160 (threonine 160) interacts with ATP. Glutamate 165 is a Mg(2+) binding site. Deamido-NAD(+)-binding residues include lysine 173 and aspartate 180. Positions 189 and 211 each coordinate ATP. Deamido-NAD(+) is bound at residue 260–261 (HK).

Belongs to the NAD synthetase family. Homodimer.

The enzyme catalyses deamido-NAD(+) + NH4(+) + ATP = AMP + diphosphate + NAD(+) + H(+). It participates in cofactor biosynthesis; NAD(+) biosynthesis; NAD(+) from deamido-NAD(+) (ammonia route): step 1/1. In terms of biological role, catalyzes the ATP-dependent amidation of deamido-NAD to form NAD. Uses ammonia as a nitrogen source. The chain is NH(3)-dependent NAD(+) synthetase from Shigella boydii serotype 18 (strain CDC 3083-94 / BS512).